Here is a 282-residue protein sequence, read N- to C-terminus: NH(3)-dependent NAD(+) synthetase (282 aa).

51 to 58 (GISGGVDS) contributes to the ATP binding site. Residue Asp-57 participates in Mg(2+) binding. Arg-148 serves as a coordination point for deamido-NAD(+). Thr-168 is an ATP binding site. Glu-173 serves as a coordination point for Mg(2+). Residues Lys-181 and Asp-188 each contribute to the deamido-NAD(+) site. Residues Lys-197 and Thr-219 each contribute to the ATP site. 268 to 269 (HK) contributes to the deamido-NAD(+) binding site.

The protein belongs to the NAD synthetase family. Homodimer.

It catalyses the reaction deamido-NAD(+) + NH4(+) + ATP = AMP + diphosphate + NAD(+) + H(+). Its pathway is cofactor biosynthesis; NAD(+) biosynthesis; NAD(+) from deamido-NAD(+) (ammonia route): step 1/1. Catalyzes the ATP-dependent amidation of deamido-NAD to form NAD. Uses ammonia as a nitrogen source. This is NH(3)-dependent NAD(+) synthetase from Burkholderia lata (strain ATCC 17760 / DSM 23089 / LMG 22485 / NCIMB 9086 / R18194 / 383).